The sequence spans 294 residues: ATP synthase gamma chain (294 aa).

The protein belongs to the ATPase gamma chain family. F-type ATPases have 2 components, CF(1) - the catalytic core - and CF(0) - the membrane proton channel. CF(1) has five subunits: alpha(3), beta(3), gamma(1), delta(1), epsilon(1). CF(0) has three main subunits: a, b and c.

The protein localises to the cell inner membrane. Produces ATP from ADP in the presence of a proton gradient across the membrane. The gamma chain is believed to be important in regulating ATPase activity and the flow of protons through the CF(0) complex. The protein is ATP synthase gamma chain of Rhizobium johnstonii (strain DSM 114642 / LMG 32736 / 3841) (Rhizobium leguminosarum bv. viciae).